Consider the following 1050-residue polypeptide: Sucrose-phosphate synthase 4 (1050 aa).

The interval Gln-134–Thr-167 is disordered. A Phosphoserine modification is found at Ser-148. Over residues Glu-149–Glu-163 the composition is skewed to basic and acidic residues. Position 180 is a phosphoserine (Ser-180).

The protein belongs to the glycosyltransferase 1 family. Homodimer or homotetramer.

The catalysed reaction is beta-D-fructose 6-phosphate + UDP-alpha-D-glucose = sucrose 6(F)-phosphate + UDP + H(+). It participates in glycan biosynthesis; sucrose biosynthesis; sucrose from D-fructose 6-phosphate and UDP-alpha-D-glucose: step 1/2. Activity is regulated by phosphorylation and moderated by concentration of metabolites and light. Functionally, plays a role in photosynthetic sucrose synthesis by catalyzing the rate-limiting step of sucrose biosynthesis from UDP-glucose and fructose- 6-phosphate. Involved in the regulation of carbon partitioning in the leaves of plants. May regulate the synthesis of sucrose and therefore play a major role as a limiting factor in the export of photoassimilates out of the leaf. Plays a role for sucrose availability that is essential for plant growth and fiber elongation. This is Sucrose-phosphate synthase 4 from Arabidopsis thaliana (Mouse-ear cress).